Reading from the N-terminus, the 416-residue chain is Lipase A (416 aa).

The first 32 residues, 1-32, serve as a signal peptide directing secretion; that stretch reads MRLAPQKPLLLSTVLHLLLSIWMLGFASLAGA. 2 cysteine pairs are disulfide-bonded: Cys67/Cys391 and Cys177/Cys180. Residue Asn179 is glycosylated (N-linked (GlcNAc...) asparagine). Catalysis depends on Ser219, which acts as the Nucleophile. Residues Asp287 and His381 each act as charge relay system in the active site.

The protein belongs to the AB hydrolase superfamily. Lipase family. In terms of processing, glycosylated.

The protein resides in the secreted. The catalysed reaction is Deacetylation of xylans and xylo-oligosaccharides.. It catalyses the reaction a triacylglycerol + H2O = a diacylglycerol + a fatty acid + H(+). Functionally, lipolytic enzyme that possesses both lipase and acetylxylan esterase activity. Active towards p-nitrophenol esters of various carbon chain length with preference for medium-chain fatty acids (C-8). Also highly active on the acetylated compounds xylose tetra-acetate and oat spelt xylan. This is Lipase A from Sodiomyces alcalophilus (Acremonium alcalophilum).